The sequence spans 180 residues: ATP-dependent protease subunit HslV (180 aa).

Threonine 7 is an active-site residue. Positions 165, 168, and 171 each coordinate Na(+).

The protein belongs to the peptidase T1B family. HslV subfamily. A double ring-shaped homohexamer of HslV is capped on each side by a ring-shaped HslU homohexamer. The assembly of the HslU/HslV complex is dependent on binding of ATP.

Its subcellular location is the cytoplasm. It carries out the reaction ATP-dependent cleavage of peptide bonds with broad specificity.. Allosterically activated by HslU binding. In terms of biological role, protease subunit of a proteasome-like degradation complex believed to be a general protein degrading machinery. This chain is ATP-dependent protease subunit HslV, found in Bacillus anthracis (strain A0248).